A 544-amino-acid chain; its full sequence is MFS-type transporter prx5 (544 aa).

The interval 1 to 28 (MAVDTEKDSVQAGSPMETPGSPVDETTE) is disordered. The next 13 membrane-spanning stretches (helical) occupy residues 36 to 56 (WIVS…IPVV), 90 to 110 (LDHL…VASA), 116 to 136 (VIAG…AAFA), 148 to 168 (IGVV…PVTA), 178 to 198 (AWNF…LLFL), 221 to 241 (GAFL…WAGV), 249 to 269 (VVAP…WESF), 290 to 310 (FTAP…SSIL), 330 to 350 (VILS…LTCF), 361 to 381 (LTGS…VTPT), 387 to 407 (IAFI…SIAI), 418 to 438 (GVSG…ATSI), and 505 to 525 (AIFV…AACL).

Belongs to the major facilitator superfamily.

It localises to the cell membrane. MFS-type transporter; part of the gene cluster that mediates the biosynthesis of PR-toxin, a bicyclic sesquiterpene belonging to the eremophilane class and acting as a mycotoxin. The chain is MFS-type transporter prx5 from Penicillium rubens (strain ATCC 28089 / DSM 1075 / NRRL 1951 / Wisconsin 54-1255) (Penicillium chrysogenum).